A 178-amino-acid polypeptide reads, in one-letter code: 6,7-dimethyl-8-ribityllumazine synthase (178 aa).

5-amino-6-(D-ribitylamino)uracil is bound by residues Phe-23, 61-63 (SFE), and 85-87 (AVI). 90–91 (QT) contributes to the (2S)-2-hydroxy-3-oxobutyl phosphate binding site. Residue His-93 is the Proton donor of the active site. Tyr-118 provides a ligand contact to 5-amino-6-(D-ribitylamino)uracil. Arg-132 provides a ligand contact to (2S)-2-hydroxy-3-oxobutyl phosphate.

Belongs to the DMRL synthase family.

The enzyme catalyses (2S)-2-hydroxy-3-oxobutyl phosphate + 5-amino-6-(D-ribitylamino)uracil = 6,7-dimethyl-8-(1-D-ribityl)lumazine + phosphate + 2 H2O + H(+). The protein operates within cofactor biosynthesis; riboflavin biosynthesis; riboflavin from 2-hydroxy-3-oxobutyl phosphate and 5-amino-6-(D-ribitylamino)uracil: step 1/2. Its function is as follows. Catalyzes the formation of 6,7-dimethyl-8-ribityllumazine by condensation of 5-amino-6-(D-ribitylamino)uracil with 3,4-dihydroxy-2-butanone 4-phosphate. This is the penultimate step in the biosynthesis of riboflavin. The polypeptide is 6,7-dimethyl-8-ribityllumazine synthase (Thermosynechococcus vestitus (strain NIES-2133 / IAM M-273 / BP-1)).